The following is a 374-amino-acid chain: Nucleosome assembly protein 1;1 (374 aa).

Residues 26 to 80 adopt a coiled-coil conformation; the sequence is VNALKNKLQDITGKPTNVLECLSPNVRKRVEVLKEIQSQHDELEAKFYEERAVLE. The Nuclear export signal signature appears at 47-62; that stretch reads LSPNVRKRVEVLKEIQ. The Nuclear localization signal motif lies at 223 to 228; the sequence is KKKPKK. Residues 299–339 are compositionally biased toward acidic residues; that stretch reads AAEDDFADLEDDDDDDEEDDDDEDEEEEDDEDDEDEEDEDD. Residues 299 to 374 form a disordered region; sequence AAEDDFADLE…GERPPECKQQ (76 aa). A compositionally biased stretch (basic residues) spans 343 to 355; it reads KKKSSAVRKRGVR. Cysteine 371 is modified (cysteine methyl ester). The S-farnesyl cysteine moiety is linked to residue cysteine 371. Positions 372–374 are cleaved as a propeptide — removed in mature form; the sequence is KQQ.

This sequence belongs to the nucleosome assembly protein (NAP) family. As to quaternary structure, binds preferentially histones H4 and H1 in vitro. Interacts with CYCB1;1.

The protein localises to the nucleus. It is found in the cytoplasm. Functionally, may modulate chromatin structure by regulation of nucleosome assembly/disassembly. Could function together with B-type cyclins in the regulation of microtubule dynamics. This chain is Nucleosome assembly protein 1;1 (NAP1;1), found in Nicotiana tabacum (Common tobacco).